The chain runs to 335 residues: MDDQATRPTAATSPVLVIAGLTGSGKTLAIQQLEQLGYTGLEGIPPDQAVYLIEAIRPRHPALAVSLNLHTPEYREQFLAFDRWRQAQGIPFLFLEARPLVLLNRLSAHRRPHPHRPGLGLLEAIEQEVRDLAPVRERCTHLLDTSELNSQQLRQQLQALVHGIPQPLNLRLVSFGFKYGAPPDANLLFDVRFLPNPFFQPHLRHLTGQDPPLQEFLFADPVTQSTYRQIFSLVQAFWPHYRAERRPHLTVAIGCTGGQHRSVALVERLAEDLRPWAVPTDNPALPALNIQVQHRHLLDSQRELEARFGPPPPAAGVEQQQVRIPLAGVPAPPHD.

ATP is bound at residue 20 to 27 (GLTGSGKT). The tract at residues 306-335 (ARFGPPPPAAGVEQQQVRIPLAGVPAPPHD) is disordered.

It belongs to the RapZ-like family.

In terms of biological role, displays ATPase and GTPase activities. The chain is Nucleotide-binding protein CYA_0911 from Synechococcus sp. (strain JA-3-3Ab) (Cyanobacteria bacterium Yellowstone A-Prime).